The following is a 385-amino-acid chain: Glutamate 5-kinase (385 aa).

Lysine 17 is a binding site for ATP. Positions 64, 151, and 165 each coordinate substrate. An ATP-binding site is contributed by 185-186; sequence SD. Positions 291–367 constitute a PUA domain; that stretch reads SGTVRVDAGA…NQIDNILGYN (77 aa).

This sequence belongs to the glutamate 5-kinase family.

It is found in the cytoplasm. It catalyses the reaction L-glutamate + ATP = L-glutamyl 5-phosphate + ADP. The protein operates within amino-acid biosynthesis; L-proline biosynthesis; L-glutamate 5-semialdehyde from L-glutamate: step 1/2. Catalyzes the transfer of a phosphate group to glutamate to form L-glutamate 5-phosphate. This is Glutamate 5-kinase from Methanosarcina acetivorans (strain ATCC 35395 / DSM 2834 / JCM 12185 / C2A).